A 395-amino-acid chain; its full sequence is Acetate kinase (395 aa).

Mg(2+) is bound at residue asparagine 8. Position 15 (lysine 15) interacts with ATP. Arginine 90 lines the substrate pocket. Residue aspartate 147 is the Proton donor/acceptor of the active site. Residues 207–211, 284–286, and 330–334 contribute to the ATP site; these read HLGNG, DMR, and GIGEN. Glutamate 383 serves as a coordination point for Mg(2+).

Belongs to the acetokinase family. In terms of assembly, homodimer. Mg(2+) is required as a cofactor. Mn(2+) serves as cofactor.

It is found in the cytoplasm. The enzyme catalyses acetate + ATP = acetyl phosphate + ADP. It functions in the pathway metabolic intermediate biosynthesis; acetyl-CoA biosynthesis; acetyl-CoA from acetate: step 1/2. Its function is as follows. Catalyzes the formation of acetyl phosphate from acetate and ATP. Can also catalyze the reverse reaction. In Enterococcus faecalis (strain ATCC 700802 / V583), this protein is Acetate kinase.